The primary structure comprises 91 residues: Probable Fe(2+)-trafficking protein (91 aa).

The protein belongs to the Fe(2+)-trafficking protein family.

Functionally, could be a mediator in iron transactions between iron acquisition and iron-requiring processes, such as synthesis and/or repair of Fe-S clusters in biosynthetic enzymes. The polypeptide is Probable Fe(2+)-trafficking protein (Actinobacillus pleuropneumoniae serotype 5b (strain L20)).